The chain runs to 515 residues: Bifunctional purine biosynthesis protein PurH (515 aa).

Positions Met-1–Val-145 constitute an MGS-like domain.

The protein belongs to the PurH family.

It catalyses the reaction (6R)-10-formyltetrahydrofolate + 5-amino-1-(5-phospho-beta-D-ribosyl)imidazole-4-carboxamide = 5-formamido-1-(5-phospho-D-ribosyl)imidazole-4-carboxamide + (6S)-5,6,7,8-tetrahydrofolate. It carries out the reaction IMP + H2O = 5-formamido-1-(5-phospho-D-ribosyl)imidazole-4-carboxamide. Its pathway is purine metabolism; IMP biosynthesis via de novo pathway; 5-formamido-1-(5-phospho-D-ribosyl)imidazole-4-carboxamide from 5-amino-1-(5-phospho-D-ribosyl)imidazole-4-carboxamide (10-formyl THF route): step 1/1. The protein operates within purine metabolism; IMP biosynthesis via de novo pathway; IMP from 5-formamido-1-(5-phospho-D-ribosyl)imidazole-4-carboxamide: step 1/1. The chain is Bifunctional purine biosynthesis protein PurH from Streptococcus equi subsp. zooepidemicus (strain H70).